The primary structure comprises 314 residues: Aspartate carbamoyltransferase catalytic subunit (314 aa).

Carbamoyl phosphate contacts are provided by arginine 58 and threonine 59. Residue lysine 86 participates in L-aspartate binding. Carbamoyl phosphate is bound by residues arginine 108, histidine 136, and glutamine 139. L-aspartate contacts are provided by arginine 169 and arginine 223. Glycine 264 and proline 265 together coordinate carbamoyl phosphate.

Belongs to the aspartate/ornithine carbamoyltransferase superfamily. ATCase family. Heterododecamer (2C3:3R2) of six catalytic PyrB chains organized as two trimers (C3), and six regulatory PyrI chains organized as three dimers (R2).

It carries out the reaction carbamoyl phosphate + L-aspartate = N-carbamoyl-L-aspartate + phosphate + H(+). It functions in the pathway pyrimidine metabolism; UMP biosynthesis via de novo pathway; (S)-dihydroorotate from bicarbonate: step 2/3. Catalyzes the condensation of carbamoyl phosphate and aspartate to form carbamoyl aspartate and inorganic phosphate, the committed step in the de novo pyrimidine nucleotide biosynthesis pathway. The polypeptide is Aspartate carbamoyltransferase catalytic subunit (Jannaschia sp. (strain CCS1)).